The sequence spans 251 residues: 3-deoxy-manno-octulosonate cytidylyltransferase (251 aa).

The protein belongs to the KdsB family.

It localises to the cytoplasm. It carries out the reaction 3-deoxy-alpha-D-manno-oct-2-ulosonate + CTP = CMP-3-deoxy-beta-D-manno-octulosonate + diphosphate. It participates in nucleotide-sugar biosynthesis; CMP-3-deoxy-D-manno-octulosonate biosynthesis; CMP-3-deoxy-D-manno-octulosonate from 3-deoxy-D-manno-octulosonate and CTP: step 1/1. The protein operates within bacterial outer membrane biogenesis; lipopolysaccharide biosynthesis. Functionally, activates KDO (a required 8-carbon sugar) for incorporation into bacterial lipopolysaccharide in Gram-negative bacteria. This is 3-deoxy-manno-octulosonate cytidylyltransferase from Chlorobium luteolum (strain DSM 273 / BCRC 81028 / 2530) (Pelodictyon luteolum).